We begin with the raw amino-acid sequence, 161 residues long: Cyclic pyranopterin monophosphate synthase (161 aa).

Residues L75–H77 and M113–E114 contribute to the substrate site. The active site involves D128.

It belongs to the MoaC family. As to quaternary structure, homohexamer; trimer of dimers.

The enzyme catalyses (8S)-3',8-cyclo-7,8-dihydroguanosine 5'-triphosphate = cyclic pyranopterin phosphate + diphosphate. It functions in the pathway cofactor biosynthesis; molybdopterin biosynthesis. Functionally, catalyzes the conversion of (8S)-3',8-cyclo-7,8-dihydroguanosine 5'-triphosphate to cyclic pyranopterin monophosphate (cPMP). The polypeptide is Cyclic pyranopterin monophosphate synthase (Salmonella heidelberg (strain SL476)).